A 258-amino-acid chain; its full sequence is Proteasome subunit alpha (258 aa).

It belongs to the peptidase T1A family. The 20S proteasome core is composed of 14 alpha and 14 beta subunits that assemble into four stacked heptameric rings, resulting in a barrel-shaped structure. The two inner rings, each composed of seven catalytic beta subunits, are sandwiched by two outer rings, each composed of seven alpha subunits. The catalytic chamber with the active sites is on the inside of the barrel. Has a gated structure, the ends of the cylinder being occluded by the N-termini of the alpha-subunits. Is capped at one or both ends by the proteasome regulatory ATPase, PAN.

The protein localises to the cytoplasm. With respect to regulation, the formation of the proteasomal ATPase PAN-20S proteasome complex, via the docking of the C-termini of PAN into the intersubunit pockets in the alpha-rings, triggers opening of the gate for substrate entry. Interconversion between the open-gate and close-gate conformations leads to a dynamic regulation of the 20S proteasome proteolysis activity. In terms of biological role, component of the proteasome core, a large protease complex with broad specificity involved in protein degradation. The polypeptide is Proteasome subunit alpha (Aeropyrum pernix (strain ATCC 700893 / DSM 11879 / JCM 9820 / NBRC 100138 / K1)).